We begin with the raw amino-acid sequence, 229 residues long: Prolactin (229 aa).

The N-terminal stretch at 1-30 (MDSKGSSQKGSRLLLLLVVSNLLLCQGVVS) is a signal peptide. An intrachain disulfide couples Cys34 to Cys41. Phosphoserine occurs at positions 56, 64, and 120. Cystine bridges form between Cys88-Cys204 and Cys221-Cys229.

Belongs to the somatotropin/prolactin family. In terms of assembly, interacts with PRLR.

Its subcellular location is the secreted. Its function is as follows. Prolactin acts primarily on the mammary gland by promoting lactation. The sequence is that of Prolactin (PRL) from Bos taurus (Bovine).